We begin with the raw amino-acid sequence, 300 residues long: 7-methylguanosine phosphate-specific 5'-nucleotidase (300 aa).

The active-site Nucleophile is aspartate 41. Mg(2+)-binding residues include aspartate 41 and aspartate 43. Aspartate 43 serves as the catalytic Proton donor. Glutamate 88 contacts CMP. Residue glutamate 88 coordinates N(7)-methyl-GMP. Substrate-binding positions include 156–157 and lysine 205; that span reads SA. Aspartate 230 contacts Mg(2+). Lysine 256 is subject to N6-acetyllysine.

This sequence belongs to the pyrimidine 5'-nucleotidase family. In terms of assembly, monomer.

Its subcellular location is the cytoplasm. It catalyses the reaction N(7)-methyl-GMP + H2O = N(7)-methylguanosine + phosphate. The catalysed reaction is CMP + H2O = cytidine + phosphate. The enzyme catalyses a ribonucleoside 5'-phosphate + H2O = a ribonucleoside + phosphate. Specifically hydrolyzes 7-methylguanosine monophosphate (m(7)GMP) to 7-methylguanosine and inorganic phosphate. The specific activity for m(7)GMP may protect cells against undesired salvage of m(7)GMP and its incorporation into nucleic acids. Also has weak activity for CMP. UMP and purine nucleotides are poor substrates. The protein is 7-methylguanosine phosphate-specific 5'-nucleotidase (Nt5c3b) of Mus musculus (Mouse).